The chain runs to 201 residues: Recombination protein RecR (201 aa).

The C4-type zinc-finger motif lies at 57–72 (CADCRTFTEQDVCNIC). Positions 81–176 (GQICVVESPA…EASRIAHGVP (96 aa)) constitute a Toprim domain.

The protein belongs to the RecR family.

In terms of biological role, may play a role in DNA repair. It seems to be involved in an RecBC-independent recombinational process of DNA repair. It may act with RecF and RecO. This chain is Recombination protein RecR, found in Salmonella choleraesuis (strain SC-B67).